A 371-amino-acid chain; its full sequence is Probable dual-specificity RNA methyltransferase RlmN (371 aa).

Glu-113 functions as the Proton acceptor in the catalytic mechanism. A Radical SAM core domain is found at 119-352; the sequence is QSWGNSVCVT…TTVRREMGGE (234 aa). A disulfide bridge connects residues Cys-126 and Cys-357. Positions 133, 137, and 140 each coordinate [4Fe-4S] cluster. S-adenosyl-L-methionine contacts are provided by residues 182 to 183, Ser-214, 237 to 239, and Asn-313; these read GE and SLH. The active-site S-methylcysteine intermediate is the Cys-357.

This sequence belongs to the radical SAM superfamily. RlmN family. It depends on [4Fe-4S] cluster as a cofactor.

The protein resides in the cytoplasm. The catalysed reaction is adenosine(2503) in 23S rRNA + 2 reduced [2Fe-2S]-[ferredoxin] + 2 S-adenosyl-L-methionine = 2-methyladenosine(2503) in 23S rRNA + 5'-deoxyadenosine + L-methionine + 2 oxidized [2Fe-2S]-[ferredoxin] + S-adenosyl-L-homocysteine. It catalyses the reaction adenosine(37) in tRNA + 2 reduced [2Fe-2S]-[ferredoxin] + 2 S-adenosyl-L-methionine = 2-methyladenosine(37) in tRNA + 5'-deoxyadenosine + L-methionine + 2 oxidized [2Fe-2S]-[ferredoxin] + S-adenosyl-L-homocysteine. Specifically methylates position 2 of adenine 2503 in 23S rRNA and position 2 of adenine 37 in tRNAs. The sequence is that of Probable dual-specificity RNA methyltransferase RlmN from Symbiobacterium thermophilum (strain DSM 24528 / JCM 14929 / IAM 14863 / T).